The chain runs to 379 residues: Pectin lyase A (379 aa).

The signal sequence occupies residues 1–20 (MKTTFLVSLATAALSSTAAA). Disulfide bonds link Cys-83/Cys-102 and Cys-92/Cys-226. The active site involves Arg-256. A disulfide bond links Cys-323 and Cys-331.

This sequence belongs to the polysaccharide lyase 1 family.

Its subcellular location is the secreted. It carries out the reaction Eliminative cleavage of (1-&gt;4)-alpha-D-galacturonan methyl ester to give oligosaccharides with 4-deoxy-6-O-methyl-alpha-D-galact-4-enuronosyl groups at their non-reducing ends.. Pectinolytic enzymes consist of four classes of enzymes: pectin lyase, polygalacturonase, pectin methylesterase and rhamnogalacturonase. Among pectinolytic enzymes, pectin lyase is the most important in depolymerization of pectin, since it cleaves internal glycosidic bonds of highly methylated pectins. This is Pectin lyase A (pelA) from Emericella nidulans (strain FGSC A4 / ATCC 38163 / CBS 112.46 / NRRL 194 / M139) (Aspergillus nidulans).